A 150-amino-acid polypeptide reads, in one-letter code: Globin-2 A chain (150 aa).

At Val2 the chain carries Blocked amino end (Val). A Globin domain is found at 10–150 (CGSEAIKANL…ALVGVVQAAL (141 aa)). Residue His102 participates in heme b binding.

This sequence belongs to the globin family. Heterotetramer of two alpha chains and two beta chains.

The polypeptide is Globin-2 A chain (Anadara inaequivalvis (Inequivalve ark)).